The following is a 116-amino-acid chain: MARIQGVDLPNDKRVEIGLTAIYGIGRQSSNKILAKLGINPDTRVKDLTESELSDIRNELDNYLTEGDLRRDVAMNIKRLKEINCYRGSRHKKGLPVRGQHTKNNARTRKGPRKQA.

A disordered region spans residues 88-116 (GSRHKKGLPVRGQHTKNNARTRKGPRKQA).

It belongs to the universal ribosomal protein uS13 family. In terms of assembly, part of the 30S ribosomal subunit. Forms a loose heterodimer with protein S19. Forms two bridges to the 50S subunit in the 70S ribosome.

Functionally, located at the top of the head of the 30S subunit, it contacts several helices of the 16S rRNA. In the 70S ribosome it contacts the 23S rRNA (bridge B1a) and protein L5 of the 50S subunit (bridge B1b), connecting the 2 subunits; these bridges are implicated in subunit movement. Contacts the tRNAs in the A and P-sites. This chain is Small ribosomal subunit protein uS13, found in Finegoldia magna (strain ATCC 29328 / DSM 20472 / WAL 2508) (Peptostreptococcus magnus).